Here is a 176-residue protein sequence, read N- to C-terminus: Co-chaperone protein HscB (176 aa).

Positions Asp2–Leu74 constitute a J domain.

The protein belongs to the HscB family. In terms of assembly, interacts with HscA and stimulates its ATPase activity. Interacts with IscU.

In terms of biological role, co-chaperone involved in the maturation of iron-sulfur cluster-containing proteins. Seems to help targeting proteins to be folded toward HscA. The chain is Co-chaperone protein HscB from Escherichia coli O7:K1 (strain IAI39 / ExPEC).